Consider the following 716-residue polypeptide: Amino-acid acetyltransferase, mitochondrial (716 aa).

The transit peptide at M1 to H44 directs the protein to the mitochondrion. Over residues F37 to R56 the composition is skewed to polar residues. Disordered regions lie at residues F37–Y58 and K96–S121. A compositionally biased stretch (basic and acidic residues) spans K101–K112. The region spanning S537–P706 is the N-acetyltransferase domain.

It belongs to the acetyltransferase family.

The protein localises to the mitochondrion. The catalysed reaction is L-glutamate + acetyl-CoA = N-acetyl-L-glutamate + CoA + H(+). The protein operates within amino-acid biosynthesis; L-arginine biosynthesis; N(2)-acetyl-L-ornithine from L-glutamate: step 1/4. N-acetylglutamate synthase involved in arginine biosynthesis. The sequence is that of Amino-acid acetyltransferase, mitochondrial (arg2) from Aspergillus fumigatus (strain CBS 144.89 / FGSC A1163 / CEA10) (Neosartorya fumigata).